The sequence spans 159 residues: Protein Smg homolog (159 aa).

It belongs to the Smg family.

This is Protein Smg homolog from Shewanella amazonensis (strain ATCC BAA-1098 / SB2B).